The chain runs to 259 residues: Uridylate kinase (259 aa).

21-24 (KLSG) contributes to the ATP binding site. Residue glycine 63 coordinates UMP. Residues glycine 64 and arginine 68 each coordinate ATP. UMP-binding positions include aspartate 83 and 144–151 (TGNPYFTT). The ATP site is built by threonine 171, phenylalanine 177, and aspartate 180.

Belongs to the UMP kinase family. Homohexamer.

The protein resides in the cytoplasm. It carries out the reaction UMP + ATP = UDP + ADP. The protein operates within pyrimidine metabolism; CTP biosynthesis via de novo pathway; UDP from UMP (UMPK route): step 1/1. Its activity is regulated as follows. Inhibited by UTP. Functionally, catalyzes the reversible phosphorylation of UMP to UDP. This is Uridylate kinase from Salinibacter ruber (strain DSM 13855 / M31).